The chain runs to 358 residues: MPRIENEPKLDFKDVLLRPKRSTLKSRADVELDREYVFRNSKATYTGVPVVASNMDTVGTFEMAAALNNHKIFTTIHKHYSVDEWKAFAASASPDTFNNLAISSGISDNDWTKLNTVITELPQLKYICLDVANGYSESFVEFIRRVREAYPKHTIMAGNVVTGEMVEELILSGADIVKVGIGPGSVCTTRKKAGVGYPQLSAVLECADAAHGLNGHVMSDGGCSNPGDVAKAFGAGADFVMIGGLFAGHDQSGGDLIEHNGKKFKLFYGMSSDTAMKKHHGSVAEYRASEGKTVTIPYRGDVNGTVQDILGGIRSACTYTGAKHLKELAKRATFIRVTQQTNDMYVPFEVPTVPAPSK.

NADP(+) is bound by residues 26-27 (SR), Lys-78, 130-132 (DVA), and 181-182 (IG). Residues Gly-182, Gly-184, and Cys-187 each coordinate K(+). Cys-187 functions as the Thioimidate intermediate in the catalytic mechanism. Thr-189 (proton donor/acceptor) is an active-site residue. Arg-190 is a K(+) binding site. GMP is bound by residues 220-222 (DGG), 243-244 (GG), 269-271 (GMS), and 287-291 (RASEG). NADP(+) is bound by residues Met-270, 286 to 287 (YR), and 315 to 318 (SACT).

It belongs to the IMPDH/GMPR family. GuaC type 1 subfamily. As to quaternary structure, homotetramer.

The enzyme catalyses IMP + NH4(+) + NADP(+) = GMP + NADPH + 2 H(+). Its function is as follows. Catalyzes the irreversible NADPH-dependent deamination of GMP to IMP. It functions in the conversion of nucleobase, nucleoside and nucleotide derivatives of G to A nucleotides, and in maintaining the intracellular balance of A and G nucleotides. The polypeptide is GMP reductase (Caenorhabditis elegans).